The following is a 215-amino-acid chain: Cytochrome b6 (215 aa).

Residues Ile-32–Phe-52 form a helical membrane-spanning segment. Residue Cys-35 participates in heme c binding. His-86 and His-100 together coordinate heme b. The next 3 membrane-spanning stretches (helical) occupy residues Ala-90–Phe-110, Leu-116–Tyr-136, and Leu-186–Ile-206. Residues His-187 and His-202 each contribute to the heme b site.

It belongs to the cytochrome b family. PetB subfamily. As to quaternary structure, the 4 large subunits of the cytochrome b6-f complex are cytochrome b6, subunit IV (17 kDa polypeptide, PetD), cytochrome f and the Rieske protein, while the 4 small subunits are PetG, PetL, PetM and PetN. The complex functions as a dimer. It depends on heme b as a cofactor. Heme c serves as cofactor.

It localises to the plastid. The protein resides in the chloroplast thylakoid membrane. Component of the cytochrome b6-f complex, which mediates electron transfer between photosystem II (PSII) and photosystem I (PSI), cyclic electron flow around PSI, and state transitions. The protein is Cytochrome b6 of Huperzia lucidula (Shining clubmoss).